A 308-amino-acid chain; its full sequence is Cysteine proteinase 3 (308 aa).

A signal peptide spans 1–13; sequence MFALILFVSLACA. A propeptide spans 14–92 (activation peptide); it reads NEVAFKQWAA…TSNVKAAVKA (79 aa). 2 cysteine pairs are disulfide-bonded: cysteine 112–cysteine 153 and cysteine 146–cysteine 186. The active site involves cysteine 115. Active-site residues include histidine 251 and asparagine 271.

Belongs to the peptidase C1 family.

The protein resides in the cytoplasm. It is found in the cytoplasmic vesicle. Its subcellular location is the phagosome. It catalyses the reaction Hydrolysis of proteins, including basement membrane collagen and azocasein. Preferential cleavage: Arg-Arg-|-Xaa in small molecule substrates including Z-Arg-Arg-|-NHMec.. In terms of biological role, cysteine protease which may be involved in pathogenicity. This chain is Cysteine proteinase 3, found in Entamoeba histolytica (strain ATCC 30459 / HM-1:IMSS / ABRM).